A 620-amino-acid polypeptide reads, in one-letter code: Chaperone protein HtpG (620 aa).

Positions 1-334 (MTTTDTAPQS…SEDLPLNLSR (334 aa)) are a; substrate-binding. The segment at 335–548 (EMLQNNPQLA…GLGPDRALER (214 aa)) is b. The c stretch occupies residues 549-620 (MLAQQNRGAA…RLNRLVLRAL (72 aa)).

It belongs to the heat shock protein 90 family. In terms of assembly, homodimer.

It is found in the cytoplasm. Functionally, molecular chaperone. Has ATPase activity. The chain is Chaperone protein HtpG from Rhodopseudomonas palustris (strain BisB18).